Here is a 402-residue protein sequence, read N- to C-terminus: Selenoprotein P (402 aa).

Residues 1–19 form the signal peptide; that stretch reads MWRGLGLALALCLLLTGGT. Sec59 is a non-standard amino acid (selenocysteine). N-linked (GlcNAc...) asparagine glycans are attached at residues Asn83 and Asn174. Positions 196-291 are disordered; it reads KTAEASQRHH…VGSESLQPSL (96 aa). The span at 203-231 shows a compositional bias: basic residues; the sequence is RHHHPHPHSHPHPHPHPHPHPHPHPHHGH. 13 tandem repeats follow at residues 204–205, 206–207, 208–209, 210–211, 212–213, 214–215, 216–217, 218–219, 220–221, 222–223, 224–225, 226–227, and 228–229. The 13 X 2 AA tandem repeats of H-[PHS] stretch occupies residues 204 to 229; sequence HHHPHPHSHPHPHPHPHPHPHPHPHH. The span at 232–247 shows a compositional bias: basic and acidic residues; sequence QLHENAHLSESPKPDT. The span at 259–269 shows a compositional bias: basic residues; the sequence is LHHHHHRHKGP. Phosphoserine is present on Ser284. Residues Sec297, Sec307, Sec338, Sec350, Sec363, Sec365, Sec372, Sec388, Sec390, Sec397, and Sec399 are each a non-standard amino acid (selenocysteine). The tract at residues 367–402 is disordered; that stretch reads LPPAAUQAAGQQLNPTEASTKUSUKNKAKMUKUPSN.

Belongs to the selenoprotein P family. In terms of processing, phosphorylation sites are present in the extracellular medium. In terms of tissue distribution, brain and kidney. Most prominently expressed in the cerebellar cortex, hippocampus and olfactory bulb.

It localises to the secreted. Its function is as follows. Constitutes a major selenium pool in the brain and may play an important role in developing and/or modulating the morphology of neurons and/or glial cells. This Bos taurus (Bovine) protein is Selenoprotein P.